The following is a 57-amino-acid chain: UPF0391 membrane protein RPB_2024 (57 aa).

The next 2 membrane-spanning stretches (helical) occupy residues 4–24 (WVVT…GGIA) and 30–50 (IAKV…VVGL).

Belongs to the UPF0391 family.

It is found in the cell membrane. The chain is UPF0391 membrane protein RPB_2024 from Rhodopseudomonas palustris (strain HaA2).